The sequence spans 473 residues: H(+)/Cl(-) exchange transporter ClcA (473 aa).

Residues 1–32 (MNTDTPTFEAQQVVRLRRGDLIRRLLQRDKTP) lie on the Cytoplasmic side of the membrane. Residues 33 to 69 (LAILLTAAVVGTVTGLIGVAFEKAVTWVQNLRIGALV) form a helical membrane-spanning segment. Topologically, residues 70 to 76 (QTADYAI) are periplasmic. The helical transmembrane segment at 77–100 (LVWPLAFILSALLAMVGYFLVRKF) threads the bilayer. Residues 101–108 (APEAGGSG) lie on the Cytoplasmic side of the membrane. The short motif at 106–110 (GSGIP) is the Selectivity filter part_1 element. Position 107 (Ser107) interacts with chloride. An intramembrane region (helical) is located at residues 109 to 116 (IPEIEGAL). Residues 117 to 123 (EELRPVR) are Cytoplasmic-facing. The helical transmembrane segment at 124–141 (WWRVLPVKFVGGMGTLGA) threads the bilayer. Residues 142 to 147 (GMVLGR) lie on the Periplasmic side of the membrane. The Selectivity filter part_2 motif lies at 146 to 150 (GREGP). The helical transmembrane segment at 148 to 166 (EGPTVQIGGNIGRMVLDLF) threads the bilayer. At 167–176 (RMRSAEARHT) the chain is on the cytoplasmic side. 2 intramembrane regions (helical) span residues 177 to 189 (LLATGAAAGLSAA) and 193 to 201 (PLAGILFII). Residues 202–214 (EEMRPQFRYNLIS) are Cytoplasmic-facing. Residues 215-232 (IKAVFTGVIMSSIVFRIF) traverse the membrane as a helical segment. Topologically, residues 233 to 252 (NGEAPIIEVGKLSNAPVNTL) are periplasmic. Residues 253-281 (WLYLILGMIFGCVGPLFNHLVLRTQDMFQ) traverse the membrane as a helical segment. At 282–287 (RFHGGE) the chain is on the cytoplasmic side. A helical membrane pass occupies residues 288–309 (IKKWVLMGGAIGGLCGILGLIE). At 310-329 (PEAAGGGFNLIPIAAAGNYS) the chain is on the periplasmic side. Residues 330 to 349 (VGLLLFIFIARVLTTLLCFS) form a helical membrane-spanning segment. Residues 350–354 (SGAPG) are Cytoplasmic-facing. The Selectivity filter part_3 signature appears at 355–359 (GIFAP). The chain crosses the membrane as a helical span at residues 355 to 376 (GIFAPMLALGTLLGTAFGMAAA). Residues Ile356 and Phe357 each contribute to the chloride site. Over 377–386 (ACFPQYHLEA) the chain is Periplasmic. An intramembrane region (helical) is located at residues 387–401 (GTFAIAGMGALLAAS). The note=Loop between two helices intramembrane region spans 402–404 (VRA). The segment at residues 405 to 416 (PLTGIVLVLEMT) is an intramembrane region (helical). An intramembrane region (note=Loop between two helices) is located at residues 417–421 (DNYQL). A helical transmembrane segment spans residues 422 to 438 (ILPMIITCLGATLLAQF). Over 439 to 473 (MGGKPLYSTILARTLAKQDAEQAAKSQRSVAGENT) the chain is Cytoplasmic. Residue Tyr445 coordinates chloride.

This sequence belongs to the chloride channel (TC 2.A.49) family. ClcA subfamily. As to quaternary structure, homodimer.

The protein resides in the cell inner membrane. It carries out the reaction 2 chloride(in) + H(+)(out) = 2 chloride(out) + H(+)(in). Functionally, proton-coupled chloride transporter. Functions as antiport system and exchanges two chloride ions for 1 proton. Probably acts as an electrical shunt for an outwardly-directed proton pump that is linked to amino acid decarboxylation, as part of the extreme acid resistance (XAR) response. The protein is H(+)/Cl(-) exchange transporter ClcA of Citrobacter koseri (strain ATCC BAA-895 / CDC 4225-83 / SGSC4696).